The primary structure comprises 343 residues: MPVQCSNCEQKRAVLKRPKTGHSLCKDCFFWAFEEEIHQTITSAGLFNRGETVAIGASGGKDSTVLAHVMKLLNERYDYGLKLLLLSVDEGITGYRDDSLETVKRNQQQYELPLKIVSYEELYGWTMDAIVKQVGLKNNCTFCGVFRRQALDRGAMMLNVDKICTGHNADDVAETVLMNVLRGDIARLRRCTAISTSSEGDGAIPRCKPLKYAYEKEIVLYAYFKKLDYFSTECIYSPNAYRGHARAFLKDLESVRPSAIIDVIHSGETLSVKEGVKMPVQGTCSRCGYISSQALCKSCVLLEGLNRGLPKLGIGKHHRLHGKILAQEPLTEQEERKLKAVDF.

Belongs to the TtcA family. CTU1/NCS6/ATPBD3 subfamily.

Its subcellular location is the cytoplasm. It functions in the pathway tRNA modification; 5-methoxycarbonylmethyl-2-thiouridine-tRNA biosynthesis. Its function is as follows. Plays a central role in 2-thiolation of mcm(5)S(2)U at tRNA wobble positions of tRNA(Lys), tRNA(Glu) and tRNA(Gln). Directly binds tRNAs and probably acts by catalyzing adenylation of tRNAs, an intermediate required for 2-thiolation. It is unclear whether it acts as a sulfurtransferase that transfers sulfur from thiocarboxylated urm1 onto the uridine of tRNAs at wobble position. The sequence is that of Cytoplasmic tRNA 2-thiolation protein 1 (ctu1) from Danio rerio (Zebrafish).